Reading from the N-terminus, the 1493-residue chain is Myosin-13 (1493 aa).

Residues 18-67 form the Myosin N-terminal SH3-like domain; sequence KVGSIVWVQDPEEAWIDGEVVEVNGEDIKVQCTSGKTVVAKGSNTYPKDM. The Myosin motor domain maps to 72–741; that stretch reads SGVDDMTTLA…QMAELDDRRT (670 aa). ATP-binding positions include 166-173 and 219-227; these read GESGAGKT and NNNSSRFGK. Actin-binding regions lie at residues 504–538, 540–563, 598–622, and 622–644; these read LIEK…YETL, DNKY…AGDV, FPPL…KQQL, and LASL…KPNN. IQ domains lie at 744 to 773, 767 to 796, 792 to 821, 813 to 842, 836 to 865, and 859 to 888; these read LGRA…AAIN, LRNA…EAAA, REAA…VTVQ, YIEA…ATTV, KTKA…AAIT, and LKKA…DARD. Residues 889–1057 are a coiled coil; sequence TVVLQAAKSM…NFLKESVLTT (169 aa). The disordered stretch occupies residues 1085-1114; it reads QLSGAEFTTPPRIQESGSDTKSRGSHIDPQ. Over residues 1102 to 1114 the composition is skewed to basic and acidic residues; sequence SDTKSRGSHIDPQ. Residues 1161–1444 form the Dilute domain; sequence DRLVQMIGSA…IASMTGVMTD (284 aa).

Belongs to the TRAFAC class myosin-kinesin ATPase superfamily. Myosin family. Plant myosin class XI subfamily. In terms of assembly, homodimer.

In terms of biological role, myosin heavy chain that is required for the cell cycle-regulated transport of various organelles and proteins for their segregation. Functions by binding with its tail domain to receptor proteins on organelles and exerting force with its N-terminal motor domain against actin filaments, thereby transporting its cargo along polarized actin cables. This chain is Myosin-13 (XI-G), found in Arabidopsis thaliana (Mouse-ear cress).